The following is a 310-amino-acid chain: MNKANLLHTDINLKITLFSEVSVGISANSILIFAHLCMLLGENRPKPIDLYIAFFSLTQLMLLITMGLIAVDMFMPWGRWDSTTCQSLIYLHRLLRGLTLSATCLLNVLWTITLSPRSSCLTKFKHKSLQHISCAFLFLCVLYMSFNSHLFISIIAYPNLTLENFMYVTQSCSLIPLSYFRKSMFSIPMAIREALLIGLMALSGGYMVAHLWRHKKQAQHLHRTSLSSKASPEQRATRTIMLLMSFFVVLYILDLVIFHSRMKFKDGSILYGVQIIVSHSYATVSPFVFICTEKRITNFLRSMCGRIVNI.

Residues 1-20 (MNKANLLHTDINLKITLFSE) lie on the Extracellular side of the membrane. The chain crosses the membrane as a helical span at residues 21 to 41 (VSVGISANSILIFAHLCMLLG). At 42 to 50 (ENRPKPIDL) the chain is on the cytoplasmic side. The helical transmembrane segment at 51-71 (YIAFFSLTQLMLLITMGLIAV) threads the bilayer. Topologically, residues 72–93 (DMFMPWGRWDSTTCQSLIYLHR) are extracellular. A disulfide bridge connects residues C85 and C172. A helical membrane pass occupies residues 94-114 (LLRGLTLSATCLLNVLWTITL). The Cytoplasmic portion of the chain corresponds to 115 to 134 (SPRSSCLTKFKHKSLQHISC). A helical transmembrane segment spans residues 135 to 155 (AFLFLCVLYMSFNSHLFISII). Over 156 to 183 (AYPNLTLENFMYVTQSCSLIPLSYFRKS) the chain is Extracellular. An N-linked (GlcNAc...) asparagine glycan is attached at N159. Residues 184–204 (MFSIPMAIREALLIGLMALSG) form a helical membrane-spanning segment. Topologically, residues 205–238 (GYMVAHLWRHKKQAQHLHRTSLSSKASPEQRATR) are cytoplasmic. A helical transmembrane segment spans residues 239-259 (TIMLLMSFFVVLYILDLVIFH). The Extracellular portion of the chain corresponds to 260 to 268 (SRMKFKDGS). A helical membrane pass occupies residues 269–289 (ILYGVQIIVSHSYATVSPFVF). Topologically, residues 290 to 310 (ICTEKRITNFLRSMCGRIVNI) are cytoplasmic.

Belongs to the G-protein coupled receptor 1 family.

It is found in the cell membrane. In terms of biological role, putative pheromone receptor implicated in the regulation of social and reproductive behavior. The polypeptide is Vomeronasal type-1 receptor 53 (Vmn1r53) (Mus musculus (Mouse)).